Here is a 196-residue protein sequence, read N- to C-terminus: Imidazoleglycerol-phosphate dehydratase (196 aa).

This sequence belongs to the imidazoleglycerol-phosphate dehydratase family.

It is found in the cytoplasm. The catalysed reaction is D-erythro-1-(imidazol-4-yl)glycerol 3-phosphate = 3-(imidazol-4-yl)-2-oxopropyl phosphate + H2O. It functions in the pathway amino-acid biosynthesis; L-histidine biosynthesis; L-histidine from 5-phospho-alpha-D-ribose 1-diphosphate: step 6/9. This chain is Imidazoleglycerol-phosphate dehydratase, found in Clostridium botulinum (strain 657 / Type Ba4).